A 117-amino-acid polypeptide reads, in one-letter code: Basic phospholipase A2 pseudexin A chain (117 aa).

Intrachain disulfides connect Cys11-Cys71, Cys27-Cys117, Cys29-Cys45, Cys44-Cys98, Cys51-Cys91, Cys60-Cys84, and Cys78-Cys89. Residues Tyr28, Gly30, and Gly32 each contribute to the Ca(2+) site. Residue His48 is part of the active site. Residue Asp49 coordinates Ca(2+). Asp92 is an active-site residue.

The protein belongs to the phospholipase A2 family. Group I subfamily. D49 sub-subfamily. It depends on Ca(2+) as a cofactor. Expressed by the venom gland.

The protein localises to the secreted. It catalyses the reaction a 1,2-diacyl-sn-glycero-3-phosphocholine + H2O = a 1-acyl-sn-glycero-3-phosphocholine + a fatty acid + H(+). Its function is as follows. PLA2 catalyzes the calcium-dependent hydrolysis of the 2-acyl groups in 3-sn-phosphoglycerides. This Pseudechis porphyriacus (Red-bellied black snake) protein is Basic phospholipase A2 pseudexin A chain.